Reading from the N-terminus, the 442-residue chain is Probable glycine dehydrogenase (decarboxylating) subunit 1 (442 aa).

Belongs to the GcvP family. N-terminal subunit subfamily. In terms of assembly, the glycine cleavage system is composed of four proteins: P, T, L and H. In this organism, the P 'protein' is a heterodimer of two subunits.

It carries out the reaction N(6)-[(R)-lipoyl]-L-lysyl-[glycine-cleavage complex H protein] + glycine + H(+) = N(6)-[(R)-S(8)-aminomethyldihydrolipoyl]-L-lysyl-[glycine-cleavage complex H protein] + CO2. Functionally, the glycine cleavage system catalyzes the degradation of glycine. The P protein binds the alpha-amino group of glycine through its pyridoxal phosphate cofactor; CO(2) is released and the remaining methylamine moiety is then transferred to the lipoamide cofactor of the H protein. In Geotalea daltonii (strain DSM 22248 / JCM 15807 / FRC-32) (Geobacter daltonii), this protein is Probable glycine dehydrogenase (decarboxylating) subunit 1.